We begin with the raw amino-acid sequence, 268 residues long: Ribosomal RNA small subunit methyltransferase A (268 aa).

S-adenosyl-L-methionine is bound by residues Asn-12, Leu-14, Gly-38, Glu-59, Asp-82, and Asn-107.

Belongs to the class I-like SAM-binding methyltransferase superfamily. rRNA adenine N(6)-methyltransferase family. RsmA subfamily.

The protein resides in the cytoplasm. The catalysed reaction is adenosine(1518)/adenosine(1519) in 16S rRNA + 4 S-adenosyl-L-methionine = N(6)-dimethyladenosine(1518)/N(6)-dimethyladenosine(1519) in 16S rRNA + 4 S-adenosyl-L-homocysteine + 4 H(+). In terms of biological role, specifically dimethylates two adjacent adenosines (A1518 and A1519) in the loop of a conserved hairpin near the 3'-end of 16S rRNA in the 30S particle. May play a critical role in biogenesis of 30S subunits. This is Ribosomal RNA small subunit methyltransferase A from Onion yellows phytoplasma (strain OY-M).